Consider the following 149-residue polypeptide: Arginine repressor (149 aa).

It belongs to the ArgR family.

Its subcellular location is the cytoplasm. It functions in the pathway amino-acid biosynthesis; L-arginine biosynthesis [regulation]. Its function is as follows. Regulates arginine biosynthesis genes. The polypeptide is Arginine repressor (Geobacillus thermodenitrificans (strain NG80-2)).